A 200-amino-acid polypeptide reads, in one-letter code: 3-isopropylmalate dehydratase small subunit (200 aa).

It belongs to the LeuD family. LeuD type 1 subfamily. Heterodimer of LeuC and LeuD.

It carries out the reaction (2R,3S)-3-isopropylmalate = (2S)-2-isopropylmalate. The protein operates within amino-acid biosynthesis; L-leucine biosynthesis; L-leucine from 3-methyl-2-oxobutanoate: step 2/4. In terms of biological role, catalyzes the isomerization between 2-isopropylmalate and 3-isopropylmalate, via the formation of 2-isopropylmaleate. This Actinobacillus pleuropneumoniae serotype 5b (strain L20) protein is 3-isopropylmalate dehydratase small subunit.